The following is a 485-amino-acid chain: Glutamyl-tRNA(Gln) amidotransferase subunit A (485 aa).

Active-site charge relay system residues include K78 and S153. S177 acts as the Acyl-ester intermediate in catalysis.

This sequence belongs to the amidase family. GatA subfamily. In terms of assembly, heterotrimer of A, B and C subunits.

It carries out the reaction L-glutamyl-tRNA(Gln) + L-glutamine + ATP + H2O = L-glutaminyl-tRNA(Gln) + L-glutamate + ADP + phosphate + H(+). Functionally, allows the formation of correctly charged Gln-tRNA(Gln) through the transamidation of misacylated Glu-tRNA(Gln) in organisms which lack glutaminyl-tRNA synthetase. The reaction takes place in the presence of glutamine and ATP through an activated gamma-phospho-Glu-tRNA(Gln). The chain is Glutamyl-tRNA(Gln) amidotransferase subunit A from Geobacter sp. (strain M21).